Here is a 382-residue protein sequence, read N- to C-terminus: Queuine tRNA-ribosyltransferase (382 aa).

The active-site Proton acceptor is the aspartate 94. Substrate-binding positions include 94–98 (DSGGF), aspartate 148, glutamine 192, and glycine 219. Positions 250–256 (GVGKPED) are RNA binding. Aspartate 269 serves as the catalytic Nucleophile. The tract at residues 274–278 (TRNAR) is RNA binding; important for wobble base 34 recognition. Cysteine 307, cysteine 309, cysteine 312, and histidine 338 together coordinate Zn(2+).

The protein belongs to the queuine tRNA-ribosyltransferase family. In terms of assembly, homodimer. Within each dimer, one monomer is responsible for RNA recognition and catalysis, while the other monomer binds to the replacement base PreQ1. The cofactor is Zn(2+).

The enzyme catalyses 7-aminomethyl-7-carbaguanine + guanosine(34) in tRNA = 7-aminomethyl-7-carbaguanosine(34) in tRNA + guanine. It participates in tRNA modification; tRNA-queuosine biosynthesis. Functionally, catalyzes the base-exchange of a guanine (G) residue with the queuine precursor 7-aminomethyl-7-deazaguanine (PreQ1) at position 34 (anticodon wobble position) in tRNAs with GU(N) anticodons (tRNA-Asp, -Asn, -His and -Tyr). Catalysis occurs through a double-displacement mechanism. The nucleophile active site attacks the C1' of nucleotide 34 to detach the guanine base from the RNA, forming a covalent enzyme-RNA intermediate. The proton acceptor active site deprotonates the incoming PreQ1, allowing a nucleophilic attack on the C1' of the ribose to form the product. After dissociation, two additional enzymatic reactions on the tRNA convert PreQ1 to queuine (Q), resulting in the hypermodified nucleoside queuosine (7-(((4,5-cis-dihydroxy-2-cyclopenten-1-yl)amino)methyl)-7-deazaguanosine). The polypeptide is Queuine tRNA-ribosyltransferase (Haemophilus ducreyi (strain 35000HP / ATCC 700724)).